The sequence spans 3110 residues: Huntingtin (3110 aa).

The segment at 1 to 58 is disordered; that stretch reads MKAFESLKSFQQQQQQQQPPPQPPPPPPPPPQPPQPPPQGQPPPPPPLPGPAEEPLHR. Lys-2 bears the N6-acetyllysine mark. A compositionally biased stretch (pro residues) spans 18-52; it reads QPPPQPPPPPPPPPQPPQPPPQGQPPPPPPLPGPA. 2 positions are modified to N6-acetyllysine: Lys-146 and Lys-204. 2 HEAT repeats span residues 174–211 and 216–253; these read PYLVNLLPCLTRTSKRPEESVQETLAAAVPKIMASFGN and NEIKVLLKAFIANLKSSSPTVRRTAAGSAVSICQHSRR. Lys-313 bears the N6-acetyllysine mark. 3 positions are modified to phosphoserine: Ser-387, Ser-389, and Ser-402. Lys-412 is subject to N6-acetyllysine. The tract at residues 462–473 is interaction with ZDHHC17; the sequence is GHDIITEQPRSQ. A disordered region spans residues 487-549; the sequence is DLTSAATDGD…PDSAVTPSDS (63 aa). The segment covering 521 to 549 has biased composition (polar residues); the sequence is DGTQASSPISDSSQTTTEGPDSAVTPSDS. Gly-522 carries N-myristoyl glycine lipidation. Ser-611 and Ser-614 each carry phosphoserine. HEAT repeat units lie at residues 773–810 and 873–911; these read FSLVDCIPLLQKTLKDESSVTCKLACTAVRHCVLSLCS and KLQERVLNNVVIYLLGDEDPRVRHVAATTLTRLVPKLFY. The disordered stretch occupies residues 1137–1195; sequence KAALPSLTNPPSLSPIRRKGKEKEPGEQTSTPMSPKKGGEASTASRQSDTSGPVTASKS. A compositionally biased stretch (low complexity) spans 1140–1151; the sequence is LPSLTNPPSLSP. 2 positions are modified to phosphoserine; by CDK5: Ser-1150 and Ser-1170. The segment covering 1178-1195 has biased composition (polar residues); sequence STASRQSDTSGPVTASKS. One copy of the HEAT 5 repeat lies at 1395–1432; sequence LFEPLVIKALKQYTTTTSVQLQKQVLDLLAQLVQLRVN. The residue at position 1845 (Ser-1845) is a Phosphoserine. The short motif at 2363 to 2372 is the Nuclear export signal element; that stretch reads IVVSLARLPL. Residues 2601-2628 are disordered; it reads EEEWDEEEEEEADAPAPTSPPVSPVNSR. Positions 2602–2613 are enriched in acidic residues; sequence EEWDEEEEEEAD.

This sequence belongs to the huntingtin family. Interacts with PFN1. Interacts through its N-terminus with PRPF40A. Interacts with PQBP1. Interacts with SETD2. Interacts with SH3GLB1. Interacts with SYVN. Interacts with TPR; the interaction is inhibited by forms of Huntingtin with expanded polyglutamine stretch. Interacts with ZDHHC13 (via ANK repeats). Interacts with ZDHHC17 (via ANK repeats). Interacts with F8A1/F8A2/F8A3. Found in a complex with F8A1/F8A2/F8A3, HTT and RAB5A; mediates the recruitment of HTT by RAB5A. Post-translationally, phosphorylation at Ser-1150 and Ser-1170 by CDK5 in response to DNA damage in nuclei of neurons protects neurons against polyglutamine expansion as well as DNA damage mediated toxicity. Cleaved by caspases downstream of the polyglutamine stretch. In terms of processing, myristoylated at Gly-522, following proteolytic cleavage at Asp-521. In terms of tissue distribution, expressed to a high degree in all the regions of the brain of adults and in meiotic cells of the testis. In addition, very low levels are detected in various non-neuronal tissues (heart, muscle, liver, lung and kidney).

It is found in the cytoplasm. The protein resides in the nucleus. Its subcellular location is the cytoplasmic vesicle. It localises to the autophagosome. In terms of biological role, may play a role in microtubule-mediated transport or vesicle function. Functionally, promotes the formation of autophagic vesicles. This is Huntingtin (Htt) from Rattus norvegicus (Rat).